A 439-amino-acid chain; its full sequence is (p)ppApp synthetase toxin Tas1 (439 aa).

The protein resides in the secreted. It catalyses the reaction AMP + ATP = adenosine 3'-diphosphate,5'-phosphate + AMP + H(+). The enzyme catalyses ADP + ATP = adenosine 3'-diphosphate,5'-diphosphate + AMP. It carries out the reaction 2 ATP = adenosine 3'-diphosphate,5'-triphosphate + AMP. In terms of biological role, type VI secretion exported toxin that pyrophosphorylates adenosine nucleotides to produce (p)ppApp. Thereby, depletes cellular ADP and ATP to dysregulate central metabolism in competitor cells. The polypeptide is (p)ppApp synthetase toxin Tas1 (tas1) (Pseudomonas aeruginosa (strain UCBPP-PA14)).